The following is a 710-amino-acid chain: Early transcription factor 82 kDa subunit (710 aa).

This sequence belongs to the poxviridae VETF large subunit family. In terms of assembly, heterodimer of a 70 kDa and a 82 kDa subunit. Part of the early transcription complex composed of ETF, RAP94/OPG109, and the DNA-directed RNA polymerase.

The protein localises to the virion. Acts with RNA polymerase to initiate transcription from early gene promoters. Is recruited by the RPO-associated protein of 94 kDa RAP94/OPG109 to form the early transcription complex, which also contains the core RNA polymerase. ETF heterodimer binds to early gene promoters. This Vaccinia virus (strain Ankara) (VACV) protein is Early transcription factor 82 kDa subunit (OPG133).